Consider the following 121-residue polypeptide: MSAVAENIQTGMPAPILFTDSAAAKVAQLIAEEGNPELKLRVFVQGGGCSGFQYGFTFDEITNEDDTTMTKNGVSLLIDAMSYQYLVGAEIDYKEDLQGAQFVIKNPNATTTCGCGSSFSA.

Iron-sulfur cluster-binding residues include Cys49, Cys113, and Cys115.

Belongs to the HesB/IscA family. Homodimer. Requires iron-sulfur cluster as cofactor.

Functionally, required for insertion of 4Fe-4S clusters. The chain is Putative iron-sulfur cluster insertion protein ErpA from Verminephrobacter eiseniae (strain EF01-2).